We begin with the raw amino-acid sequence, 576 residues long: Urease subunit alpha (576 aa).

Residues 132–576 enclose the Urease domain; the sequence is GGIDTHIHFI…LPMAQRYFLF (445 aa). Ni(2+) is bound by residues H137, H139, and K220. K220 is subject to N6-carboxylysine. H222 is a binding site for substrate. Ni(2+) contacts are provided by H249 and H275. H323 (proton donor) is an active-site residue. D363 is a Ni(2+) binding site.

The protein belongs to the metallo-dependent hydrolases superfamily. Urease alpha subunit family. In terms of assembly, heterotrimer of UreA (gamma), UreB (beta) and UreC (alpha) subunits. Three heterotrimers associate to form the active enzyme. It depends on Ni cation as a cofactor. In terms of processing, carboxylation allows a single lysine to coordinate two nickel ions.

It localises to the cytoplasm. It catalyses the reaction urea + 2 H2O + H(+) = hydrogencarbonate + 2 NH4(+). It functions in the pathway nitrogen metabolism; urea degradation; CO(2) and NH(3) from urea (urease route): step 1/1. The polypeptide is Urease subunit alpha (Paenarthrobacter aurescens (strain TC1)).